Consider the following 202-residue polypeptide: Glycerol-3-phosphate acyltransferase (202 aa).

Helical transmembrane passes span 1–21, 84–104, 116–136, and 143–163; these read MTLIALILPAYLLGSISFGVL, AVAAAALGVFLGHLFPVFLHF, ILLGFNPWMGLLAATIWLAVA, and SLAAIVAASLAPFYALFFLGF.

It belongs to the PlsY family. As to quaternary structure, probably interacts with PlsX.

The protein resides in the cell inner membrane. The enzyme catalyses an acyl phosphate + sn-glycerol 3-phosphate = a 1-acyl-sn-glycero-3-phosphate + phosphate. The protein operates within lipid metabolism; phospholipid metabolism. Its function is as follows. Catalyzes the transfer of an acyl group from acyl-phosphate (acyl-PO(4)) to glycerol-3-phosphate (G3P) to form lysophosphatidic acid (LPA). This enzyme utilizes acyl-phosphate as fatty acyl donor, but not acyl-CoA or acyl-ACP. In Nitrosospira multiformis (strain ATCC 25196 / NCIMB 11849 / C 71), this protein is Glycerol-3-phosphate acyltransferase.